The chain runs to 226 residues: HTH-type transcriptional regulator Rv0324 (226 aa).

The 95-residue stretch at 7–101 (RKAALLDQVA…LVQVVADEHL (95 aa)) folds into the HTH arsR-type domain. The H-T-H motif DNA-binding region spans 41 to 64 (VEAIATATGMNLTTASANLQALKS). One can recognise a Rhodanese domain in the interval 129–218 (EAGEVTLVDV…WRLAGLPVDE (90 aa)). The active-site Cysteine persulfide intermediate is C177.

In terms of biological role, part of a regulatory network that coordinates tolerance to the antitubercular drug bedaquiline. The sequence is that of HTH-type transcriptional regulator Rv0324 from Mycobacterium tuberculosis (strain ATCC 25618 / H37Rv).